We begin with the raw amino-acid sequence, 396 residues long: Cystathionine beta-lyase (396 aa).

K211 carries the post-translational modification N6-(pyridoxal phosphate)lysine.

Belongs to the trans-sulfuration enzymes family. In terms of assembly, homotetramer. It depends on pyridoxal 5'-phosphate as a cofactor.

The protein localises to the cytoplasm. The catalysed reaction is L,L-cystathionine + H2O = L-homocysteine + pyruvate + NH4(+). It carries out the reaction an S-substituted L-cysteine + H2O = a thiol + pyruvate + NH4(+). Its pathway is amino-acid biosynthesis; L-methionine biosynthesis via de novo pathway; L-homocysteine from L-cystathionine: step 1/1. Functionally, catalyzes the cleavage of cystathionine to homocysteine, pyruvate and ammonia during methionine biosynthesis. The protein is Cystathionine beta-lyase (metC) of Haemophilus influenzae (strain ATCC 51907 / DSM 11121 / KW20 / Rd).